We begin with the raw amino-acid sequence, 249 residues long: Phosphoribosylaminoimidazole-succinocarboxamide synthase (249 aa).

This sequence belongs to the SAICAR synthetase family.

It catalyses the reaction 5-amino-1-(5-phospho-D-ribosyl)imidazole-4-carboxylate + L-aspartate + ATP = (2S)-2-[5-amino-1-(5-phospho-beta-D-ribosyl)imidazole-4-carboxamido]succinate + ADP + phosphate + 2 H(+). The protein operates within purine metabolism; IMP biosynthesis via de novo pathway; 5-amino-1-(5-phospho-D-ribosyl)imidazole-4-carboxamide from 5-amino-1-(5-phospho-D-ribosyl)imidazole-4-carboxylate: step 1/2. The protein is Phosphoribosylaminoimidazole-succinocarboxamide synthase of Chloroflexus aurantiacus (strain ATCC 29366 / DSM 635 / J-10-fl).